Here is a 334-residue protein sequence, read N- to C-terminus: Coiled-coil domain-containing protein 89 (334 aa).

A coiled-coil region spans residues 75–318 (EAAQRFQSER…EAYKKHSGDL (244 aa)).

It belongs to the CCDC89 family. Interacts (via C-terminus) with hey1/bc8 (via Orange domain). In terms of tissue distribution, in adults, expressed at varying levels in different organs including the liver and brain, with highest expression in the testis.

The protein resides in the cytoplasm. It is found in the nucleus. The chain is Coiled-coil domain-containing protein 89 from Xenopus laevis (African clawed frog).